Here is a 171-residue protein sequence, read N- to C-terminus: Urease accessory protein UreE (171 aa).

The disordered stretch occupies residues 143 to 171; that stretch reads SGGHQHHHGHDHDHGHHGHDHDHHHPDHE. A compositionally biased stretch (basic and acidic residues) spans 152 to 171; that stretch reads HDHDHGHHGHDHDHHHPDHE.

The protein belongs to the UreE family.

The protein resides in the cytoplasm. Its function is as follows. Involved in urease metallocenter assembly. Binds nickel. Probably functions as a nickel donor during metallocenter assembly. The polypeptide is Urease accessory protein UreE (Brucella abortus biovar 1 (strain 9-941)).